A 313-amino-acid polypeptide reads, in one-letter code: NADH-ubiquinone oxidoreductase chain 1 (313 aa).

Helical transmembrane passes span 7-27 (LIGS…LTLL), 73-93 (IFYY…WMSM), 104-124 (LGVL…MVAG), 150-170 (LALI…LNFF), 175-195 (YMWF…SCLA), 226-246 (LIFL…SVIF), 250-270 (DIYS…FIWV), and 293-313 (MSLN…SMLF).

Belongs to the complex I subunit 1 family.

It is found in the mitochondrion inner membrane. It carries out the reaction a ubiquinone + NADH + 5 H(+)(in) = a ubiquinol + NAD(+) + 4 H(+)(out). Core subunit of the mitochondrial membrane respiratory chain NADH dehydrogenase (Complex I) that is believed to belong to the minimal assembly required for catalysis. Complex I functions in the transfer of electrons from NADH to the respiratory chain. The immediate electron acceptor for the enzyme is believed to be ubiquinone. The sequence is that of NADH-ubiquinone oxidoreductase chain 1 from Aedes aegypti (Yellowfever mosquito).